A 77-amino-acid polypeptide reads, in one-letter code: Sec-independent protein translocase protein TatA (77 aa).

The helical transmembrane segment at 3-23 (VFGIGLPELIVILVVALLIFG) threads the bilayer. The segment at 56-77 (TAALEEEQQAKAEAESPREISP) is disordered. Residues 63-77 (QQAKAEAESPREISP) show a composition bias toward basic and acidic residues.

This sequence belongs to the TatA/E family. As to quaternary structure, forms a complex with TatC.

The protein resides in the cell inner membrane. Its function is as follows. Part of the twin-arginine translocation (Tat) system that transports large folded proteins containing a characteristic twin-arginine motif in their signal peptide across membranes. TatA could form the protein-conducting channel of the Tat system. The sequence is that of Sec-independent protein translocase protein TatA from Thermosynechococcus vestitus (strain NIES-2133 / IAM M-273 / BP-1).